A 572-amino-acid polypeptide reads, in one-letter code: Urease subunit alpha (572 aa).

The region spanning 136 to 572 (GGIDTHIHFI…VPLGQRYFLF (437 aa)) is the Urease domain. His-141, His-143, and Lys-224 together coordinate Ni(2+). An N6-carboxylysine modification is found at Lys-224. Residue His-226 coordinates substrate. Ni(2+) is bound by residues His-253 and His-279. The active-site Proton donor is the His-327. Residue Asp-367 coordinates Ni(2+).

The protein belongs to the metallo-dependent hydrolases superfamily. Urease alpha subunit family. As to quaternary structure, heterotrimer of UreA (gamma), UreB (beta) and UreC (alpha) subunits. Three heterotrimers associate to form the active enzyme. Ni cation serves as cofactor. In terms of processing, carboxylation allows a single lysine to coordinate two nickel ions.

It localises to the cytoplasm. It catalyses the reaction urea + 2 H2O + H(+) = hydrogencarbonate + 2 NH4(+). Its pathway is nitrogen metabolism; urea degradation; CO(2) and NH(3) from urea (urease route): step 1/1. The polypeptide is Urease subunit alpha (Haemophilus influenzae (strain 86-028NP)).